Reading from the N-terminus, the 395-residue chain is NADH-quinone oxidoreductase subunit D (395 aa).

This sequence belongs to the complex I 49 kDa subunit family. In terms of assembly, NDH-1 is composed of 14 different subunits. Subunits NuoB, C, D, E, F, and G constitute the peripheral sector of the complex.

The protein resides in the cell inner membrane. The catalysed reaction is a quinone + NADH + 5 H(+)(in) = a quinol + NAD(+) + 4 H(+)(out). Functionally, NDH-1 shuttles electrons from NADH, via FMN and iron-sulfur (Fe-S) centers, to quinones in the respiratory chain. The immediate electron acceptor for the enzyme in this species is believed to be ubiquinone. Couples the redox reaction to proton translocation (for every two electrons transferred, four hydrogen ions are translocated across the cytoplasmic membrane), and thus conserves the redox energy in a proton gradient. The polypeptide is NADH-quinone oxidoreductase subunit D (Anaplasma phagocytophilum (strain HZ)).